The primary structure comprises 86 residues: MSVDTQKVIEDNKRSAQDTGSPEVQVALLTARIELLTGHFKTHKKDHHSRRGLLQMVNRRRSLLDYLKKKDGERYKSLIEKLGLRR.

The interval 1–22 (MSVDTQKVIEDNKRSAQDTGSP) is disordered. A compositionally biased stretch (basic and acidic residues) spans 7 to 16 (KVIEDNKRSA).

The protein belongs to the universal ribosomal protein uS15 family. In terms of assembly, part of the 30S ribosomal subunit. Forms a bridge to the 50S subunit in the 70S ribosome, contacting the 23S rRNA.

In terms of biological role, one of the primary rRNA binding proteins, it binds directly to 16S rRNA where it helps nucleate assembly of the platform of the 30S subunit by binding and bridging several RNA helices of the 16S rRNA. Functionally, forms an intersubunit bridge (bridge B4) with the 23S rRNA of the 50S subunit in the ribosome. The sequence is that of Small ribosomal subunit protein uS15 from Xanthomonas campestris pv. campestris (strain 8004).